A 199-amino-acid polypeptide reads, in one-letter code: MSRVLVIESSARQEGSVSRQLTAEFLARWKAAHPNDEIVVRDLANEPVPHLDIDLLGGWTKPAEQQSEAEKAALARSERLTGELLGADVLVLAAPMYNFAIPSTLKAWLDHVLRAGVTFKYTENGPQGLLSGKRAFVLTARGGIYAGSPLDHQEPYLRQALGFIGIHDVSFIHAEGLNMGGDFQQKGLARAKEKLAQVA.

Residues serine 10, 16–18, and 96–99 contribute to the FMN site; these read SVS and MYNF.

This sequence belongs to the azoreductase type 1 family. As to quaternary structure, homodimer. Requires FMN as cofactor.

It catalyses the reaction 2 a quinone + NADH + H(+) = 2 a 1,4-benzosemiquinone + NAD(+). The enzyme catalyses N,N-dimethyl-1,4-phenylenediamine + anthranilate + 2 NAD(+) = 2-(4-dimethylaminophenyl)diazenylbenzoate + 2 NADH + 2 H(+). Its function is as follows. Quinone reductase that provides resistance to thiol-specific stress caused by electrophilic quinones. Functionally, also exhibits azoreductase activity. Catalyzes the reductive cleavage of the azo bond in aromatic azo compounds to the corresponding amines. The chain is FMN-dependent NADH:quinone oxidoreductase from Azotobacter vinelandii (strain DJ / ATCC BAA-1303).